We begin with the raw amino-acid sequence, 643 residues long: Zinc finger protein 23 (643 aa).

The KRAB domain maps to 1 to 43 (MLENYGNVASLGFPLLKPAVISQLEGGSELGGSSPLAAGTGLQ). A Glycyl lysine isopeptide (Lys-Gly) (interchain with G-Cter in SUMO2) cross-link involves residue Lys-157. A C2H2-type 1; degenerate zinc finger spans residues 168–190 (FKCEELVEPFRCDSQLIQHQENN). 16 C2H2-type zinc fingers span residues 196-218 (YQCS…QRLH), 224-246 (FKCV…QTIH), 252-274 (YQCK…QRIH), 280-302 (YQCK…QRVH), 308-330 (YECN…QRIH), 336-358 (YECN…QSIH), 364-386 (YQCK…QRIH), 392-414 (YECT…QRIH), 420-442 (YECN…LRIH), 448-470 (YECN…QRIH), 476-498 (FECN…HRIH), 504-526 (YQCK…QRIH), 532-554 (FKCM…QRIH), 560-582 (FQCK…QRSH), 588-610 (FRCV…QTVH), and 616-638 (YMCS…QSVH).

The protein belongs to the krueppel C2H2-type zinc-finger protein family.

Its subcellular location is the nucleus. Its function is as follows. May be involved in transcriptional regulation. May have a role in embryonic development. The chain is Zinc finger protein 23 (ZNF23) from Homo sapiens (Human).